Here is a 668-residue protein sequence, read N- to C-terminus: DNA ligase (668 aa).

NAD(+) contacts are provided by residues 32 to 36 (DSEYD), 81 to 82 (SL), and Glu110. The active-site N6-AMP-lysine intermediate is the Lys112. NAD(+) contacts are provided by Arg133, Glu167, Lys283, and Lys307. Residues Cys401, Cys404, Cys419, and Cys424 each coordinate Zn(2+). The 83-residue stretch at 586-668 (QTDSEFNGKT…IQKQKEVENK (83 aa)) folds into the BRCT domain.

Belongs to the NAD-dependent DNA ligase family. LigA subfamily. Requires Mg(2+) as cofactor. It depends on Mn(2+) as a cofactor.

It carries out the reaction NAD(+) + (deoxyribonucleotide)n-3'-hydroxyl + 5'-phospho-(deoxyribonucleotide)m = (deoxyribonucleotide)n+m + AMP + beta-nicotinamide D-nucleotide.. Its function is as follows. DNA ligase that catalyzes the formation of phosphodiester linkages between 5'-phosphoryl and 3'-hydroxyl groups in double-stranded DNA using NAD as a coenzyme and as the energy source for the reaction. It is essential for DNA replication and repair of damaged DNA. This is DNA ligase from Staphylococcus carnosus (strain TM300).